A 206-amino-acid chain; its full sequence is Guanylate kinase (206 aa).

Residues 6 to 184 (GNLFILSAPS…ALTDIETIVM (179 aa)) form the Guanylate kinase-like domain. 13–20 (APSGAGKS) contributes to the ATP binding site.

Belongs to the guanylate kinase family.

The protein localises to the cytoplasm. The catalysed reaction is GMP + ATP = GDP + ADP. Essential for recycling GMP and indirectly, cGMP. This is Guanylate kinase from Pseudoalteromonas translucida (strain TAC 125).